Consider the following 205-residue polypeptide: Holliday junction branch migration complex subunit RuvA (205 aa).

Positions 1–64 (MIGRIRGLLV…EDAQLLYGFI (64 aa)) are domain I. Residues 65 to 143 (SKQERALFRL…SLMEASVGSE (79 aa)) form a domain II region. The tract at residues 144 to 156 (REFMLQSNYTAPV) is flexible linker. Positions 157–205 (VANTAEEDAIAALLSLGYKPAQASKAVSAVYVDGIDSESLIKSALKSML) are domain III.

It belongs to the RuvA family. In terms of assembly, homotetramer. Forms an RuvA(8)-RuvB(12)-Holliday junction (HJ) complex. HJ DNA is sandwiched between 2 RuvA tetramers; dsDNA enters through RuvA and exits via RuvB. An RuvB hexamer assembles on each DNA strand where it exits the tetramer. Each RuvB hexamer is contacted by two RuvA subunits (via domain III) on 2 adjacent RuvB subunits; this complex drives branch migration. In the full resolvosome a probable DNA-RuvA(4)-RuvB(12)-RuvC(2) complex forms which resolves the HJ.

The protein localises to the cytoplasm. In terms of biological role, the RuvA-RuvB-RuvC complex processes Holliday junction (HJ) DNA during genetic recombination and DNA repair, while the RuvA-RuvB complex plays an important role in the rescue of blocked DNA replication forks via replication fork reversal (RFR). RuvA specifically binds to HJ cruciform DNA, conferring on it an open structure. The RuvB hexamer acts as an ATP-dependent pump, pulling dsDNA into and through the RuvAB complex. HJ branch migration allows RuvC to scan DNA until it finds its consensus sequence, where it cleaves and resolves the cruciform DNA. This is Holliday junction branch migration complex subunit RuvA from Shewanella piezotolerans (strain WP3 / JCM 13877).